An 879-amino-acid polypeptide reads, in one-letter code: Leucine--tRNA ligase (879 aa).

The short motif at 45–55 is the 'HIGH' region element; sequence PYPSGALHMGH. Residues 637–641 carry the 'KMSKS' region motif; the sequence is KMSKS. Residue Lys-640 coordinates ATP.

It belongs to the class-I aminoacyl-tRNA synthetase family.

The protein resides in the cytoplasm. It carries out the reaction tRNA(Leu) + L-leucine + ATP = L-leucyl-tRNA(Leu) + AMP + diphosphate. This Xylella fastidiosa (strain M12) protein is Leucine--tRNA ligase.